We begin with the raw amino-acid sequence, 83 residues long: Kunitz-type serine protease inhibitor homolog beta-bungarotoxin B6 chain (83 aa).

The N-terminal stretch at 1-24 is a signal peptide; the sequence is MSSGGLLLLLGLLRVCAELTPVSS. In terms of domain architecture, BPTI/Kunitz inhibitor spans 29-79; the sequence is CNLPPDPGPCHDNKFAFYHHPASNKCKEFVYGGCGGNDNRFKTRNKCQCTC. 3 disulfides stabilise this stretch: C29/C79, C38/C62, and C54/C75.

It belongs to the venom Kunitz-type family. As to quaternary structure, heterodimer; disulfide-linked. The A chains have phospholipase A2 activity and the B chains show homology with the basic protease inhibitors. In terms of tissue distribution, expressed by the venom gland.

It is found in the secreted. Its function is as follows. Beta-bungarotoxins are presynaptic neurotoxins of the venom. The B chain is homologous to venom basic protease inhibitors but has no protease inhibitor activity and blocks voltage-gated potassium channels (Kv). The chain is Kunitz-type serine protease inhibitor homolog beta-bungarotoxin B6 chain from Bungarus multicinctus (Many-banded krait).